Reading from the N-terminus, the 242-residue chain is MWVNTLRCPEGIEKVFPGPFACYNRLFDPGSQLDSYALIEETLHTYGPFDGAFGFSQGAALIVSYLLERRAAYPDESLPFRFLILCSPVVPLAGNAEYCHRILGCLSRDNESRIRSCQDTQISDLPERARIAMTMLTDILDASTTITQEPRRFYLDRELPDVPCALHPDLCLTRLPVATLHVRGTTDAKALWNCGFLIQSFFDSPKLRVFEHKSGHDIPRSGPEVRQMLCAMEWIIAQSELP.

Catalysis depends on charge relay system residues serine 56, aspartate 138, and histidine 216.

It belongs to the AB hydrolase 3 family.

The protein operates within alkaloid biosynthesis. In terms of biological role, serine hydrolase; part of the gene cluster that mediates the biosynthesis of communesins, a prominent class of indole alkaloids with great potential as pharmaceuticals. Communesins are biosynthesized by the coupling of tryptamine and aurantioclavine, two building blocks derived from L-tryptophan. The L-tryptophan decarboxylase cnsB converts L-tryptophan to tryptamine, whereas the tryptophan dimethylallyltransferase cnsF converts L-tryptophan to 4-dimethylallyl tryptophan which is further transformed to aurantioclavine by the aurantioclavine synthase cnsA, probably aided by the catalase cnsD. The cytochrome P450 monooxygenase cnsC catalyzes the heterodimeric coupling between the two different indole moieties, tryptamine and aurantioclavine, to construct vicinal quaternary stereocenters and yield the heptacyclic communesin scaffold. The O-methyltransferase cnsE then methylates the communesin scaffold to produce communesin K, the simplest characterized communesin that contains the heptacyclic core. The dioxygenase cnsJ converts communesin K into communesin I. Acylation to introduce the hexadienyl group at position N16 of communesin I by the acyltransferase cnsK leads to the production of communesin B. The hexadienyl group is produced by the highly reducing polyketide synthase cnsI, before being hydrolytically removed from cnsI by the serine hydrolase cnsH, converted into hexadienyl-CoA by the CoA ligase cnsG, and then transferred to communesin I by cnsK. Surprisingly, cnsK may also be a promiscuous acyltransferase that can tolerate a range of acyl groups, including acetyl-, propionyl-, and butyryl-CoA, which lead to communesins A, G and H respectively. The roles of the alpha-ketoglutarate-dependent dioxygenases cnsM and cnsP have still to be determined. This Penicillium expansum (Blue mold rot fungus) protein is Serine hydrolase cnsH.